The chain runs to 434 residues: Glutamate-1-semialdehyde 2,1-aminomutase (434 aa).

At lysine 271 the chain carries N6-(pyridoxal phosphate)lysine.

It belongs to the class-III pyridoxal-phosphate-dependent aminotransferase family. HemL subfamily. In terms of assembly, homodimer. The cofactor is pyridoxal 5'-phosphate.

The protein localises to the cytoplasm. The enzyme catalyses (S)-4-amino-5-oxopentanoate = 5-aminolevulinate. It participates in porphyrin-containing compound metabolism; protoporphyrin-IX biosynthesis; 5-aminolevulinate from L-glutamyl-tRNA(Glu): step 2/2. The protein operates within porphyrin-containing compound metabolism; chlorophyll biosynthesis. This chain is Glutamate-1-semialdehyde 2,1-aminomutase, found in Prochlorococcus marinus (strain MIT 9312).